The following is a 78-amino-acid chain: Large ribosomal subunit protein bL28 (78 aa).

Belongs to the bacterial ribosomal protein bL28 family.

The chain is Large ribosomal subunit protein bL28 from Psychrobacter sp. (strain PRwf-1).